A 446-amino-acid polypeptide reads, in one-letter code: N-succinylarginine dihydrolase (446 aa).

Substrate-binding positions include Ala-19 to Ser-28, Asn-110, and His-137 to Arg-138. Glu-174 is a catalytic residue. Substrate is bound at residue Arg-213. His-249 is an active-site residue. The substrate site is built by Asp-251 and Asn-364. Cys-370 acts as the Nucleophile in catalysis.

This sequence belongs to the succinylarginine dihydrolase family. Homodimer.

The catalysed reaction is N(2)-succinyl-L-arginine + 2 H2O + 2 H(+) = N(2)-succinyl-L-ornithine + 2 NH4(+) + CO2. Its pathway is amino-acid degradation; L-arginine degradation via AST pathway; L-glutamate and succinate from L-arginine: step 2/5. Functionally, catalyzes the hydrolysis of N(2)-succinylarginine into N(2)-succinylornithine, ammonia and CO(2). This chain is N-succinylarginine dihydrolase, found in Burkholderia ambifaria (strain MC40-6).